Consider the following 204-residue polypeptide: MAEEVEEERLKYLDFVRAAGVYAVDSFSTLYLYAKDISGPLKPGVDTIENVVKTVVTPVYYIPLEAVKFVDKTVDVSVTSLDGVVPPVIKQVSAQTYSVAQDAPRIVLDVASSVFNTGVQEGAKALYANLEPKAEQYAVITWRALNKLPLVPQVANVVVPTAVYFSEKYNDVVRGTTEQGYRVSSYLPLLPTEKITKVFGDEAS.

It belongs to the REF/SRPP family. In terms of assembly, auto-assembles in solution into stable nanomultimers of a globular nature. In terms of processing, not glycosylated. The N-terminus is blocked. Post-translationally, consistent shifts of about 266 Da observed by MS in various forms of the intact protein suggest the addition of stearolyl groups. Highly expressed in the specialized vessel laticifers, but localized only in the laticifer layers in the conducting phloem. Also detected in leaves.

Its subcellular location is the cytoplasm. Functionally, involved in the biosynthesis of rubber, an isoprenoid polymer (cis-1,4-polyisoprene). In Hevea brasiliensis (Para rubber tree), this protein is Small rubber particle protein.